The sequence spans 129 residues: Fluoride-specific ion channel FluC (129 aa).

A run of 4 helical transmembrane segments spans residues 10-30, 35-55, 71-91, and 105-125; these read LLVG…ALAF, PGFP…IGFL, LFLV…MFEG, and LYLA…IIAA. 2 residues coordinate Na(+): Gly-79 and Thr-82.

Belongs to the fluoride channel Fluc/FEX (TC 1.A.43) family.

The protein resides in the cell inner membrane. The catalysed reaction is fluoride(in) = fluoride(out). Its activity is regulated as follows. Na(+) is not transported, but it plays an essential structural role and its presence is essential for fluoride channel function. In terms of biological role, fluoride-specific ion channel. Important for reducing fluoride concentration in the cell, thus reducing its toxicity. The chain is Fluoride-specific ion channel FluC from Chlorobium luteolum (strain DSM 273 / BCRC 81028 / 2530) (Pelodictyon luteolum).